The primary structure comprises 90 residues: Phosphocarrier protein NPr (90 aa).

Residues 2 to 90 (TVKQTVEISN…ALFNAGFDED (89 aa)) enclose the HPr domain. The active-site Pros-phosphohistidine intermediate is H16.

The protein belongs to the HPr family.

The protein localises to the cytoplasm. Component of the phosphoenolpyruvate-dependent nitrogen-metabolic phosphotransferase system (nitrogen-metabolic PTS), that seems to be involved in regulating nitrogen metabolism. The phosphoryl group from phosphoenolpyruvate (PEP) is transferred to the phosphoryl carrier protein NPr by enzyme I-Ntr. Phospho-NPr then transfers it to EIIA-Ntr. Could function in the transcriptional regulation of sigma-54 dependent operons in conjunction with the NPr (PtsO) and EIIA-Ntr (PtsN) proteins. In Klebsiella oxytoca, this protein is Phosphocarrier protein NPr (ptsO).